A 497-amino-acid polypeptide reads, in one-letter code: MQNLNKTEKTFFGQPRGLLTLFQTEFWERFSYYGMRAILVYYLYALTTADNAGLGLPKAQAMAIVSIYGALVYLSTIVGGWVADRLLGASRTIFLGGILITLGHIALATPFGLSSLFVALFLIILGTGMLKPNISNMVGHLYSKDDSRRDTGFNIFVVGINMGSLIAPLIVGTVGQGVNYHLGFSLAAIGMIFALFAYWYGRLRHFPEIGREPSNPMDSKARRNFLITLTIVVIVAIIGFFLLYQASPANFINNFINVLSIIGIVVPIIYFVMMFTSKKVESDERRKLTAYIPLFLSAIVFWAIEEQSSTIIAVWGESRSNLDPTWFGITFHIDPSWYQLLNPLFIVLLSPIFVRLWNKLGERQPSTIVKFGLGLMLTGISYLIMTLPGLLNGTSGRASALWLVLMFAVQMAGELLVSPVGLSVSTKLAPVAFQSQMMAMWFLADSTSQAINAQITPLFKAATEVHFFAITGIIGIIVGIILLIVKKPILKLMGDVR.

The Cytoplasmic portion of the chain corresponds to 1–36 (MQNLNKTEKTFFGQPRGLLTLFQTEFWERFSYYGMR). Residues 37–55 (AILVYYLYALTTADNAGLG) form a helical membrane-spanning segment. At 56–64 (LPKAQAMAI) the chain is on the extracellular side. Residues 65–83 (VSIYGALVYLSTIVGGWVA) form a helical membrane-spanning segment. Residues 84-92 (DRLLGASRT) lie on the Cytoplasmic side of the membrane. Residues 93–111 (IFLGGILITLGHIALATPF) traverse the membrane as a helical segment. Residues 112-115 (GLSS) are Extracellular-facing. The chain crosses the membrane as a helical span at residues 116 to 134 (LFVALFLIILGTGMLKPNI). The Cytoplasmic segment spans residues 135 to 154 (SNMVGHLYSKDDSRRDTGFN). The chain crosses the membrane as a helical span at residues 155-173 (IFVVGINMGSLIAPLIVGT). The Extracellular segment spans residues 174–181 (VGQGVNYH). The chain crosses the membrane as a helical span at residues 182–200 (LGFSLAAIGMIFALFAYWY). At 201–224 (GRLRHFPEIGREPSNPMDSKARRN) the chain is on the cytoplasmic side. The chain crosses the membrane as a helical span at residues 225–243 (FLITLTIVVIVAIIGFFLL). Topologically, residues 244 to 254 (YQASPANFINN) are extracellular. A helical membrane pass occupies residues 255 to 273 (FINVLSIIGIVVPIIYFVM). Over 274–293 (MFTSKKVESDERRKLTAYIP) the chain is Cytoplasmic. A helical transmembrane segment spans residues 294-312 (LFLSAIVFWAIEEQSSTII). Topologically, residues 313–335 (AVWGESRSNLDPTWFGITFHIDP) are extracellular. The chain crosses the membrane as a helical span at residues 336–354 (SWYQLLNPLFIVLLSPIFV). At 355–372 (RLWNKLGERQPSTIVKFG) the chain is on the cytoplasmic side. The chain crosses the membrane as a helical span at residues 373-391 (LGLMLTGISYLIMTLPGLL). The Extracellular portion of the chain corresponds to 392-425 (NGTSGRASALWLVLMFAVQMAGELLVSPVGLSVS). The helical transmembrane segment at 426-444 (TKLAPVAFQSQMMAMWFLA) threads the bilayer. Residues 445 to 497 (DSTSQAINAQITPLFKAATEVHFFAITGIIGIIVGIILLIVKKPILKLMGDVR) lie on the Cytoplasmic side of the membrane.

Belongs to the major facilitator superfamily. Proton-dependent oligopeptide transporter (POT/PTR) (TC 2.A.17) family.

It is found in the cell membrane. Functionally, proton-dependent uptake of di- or tri-peptides. This chain is Di-/tripeptide transporter (dtpT), found in Lactococcus lactis subsp. lactis (strain IL1403) (Streptococcus lactis).